The primary structure comprises 402 residues: CCA-adding enzyme (402 aa).

ATP is bound by residues Gly-32 and Arg-35. The CTP site is built by Gly-32 and Arg-35. Residues Asp-45 and Asp-47 each coordinate Mg(2+). 5 residues coordinate ATP: Arg-119, Asp-162, Arg-165, Arg-168, and Arg-171. Positions 119, 162, 165, 168, and 171 each coordinate CTP.

The protein belongs to the tRNA nucleotidyltransferase/poly(A) polymerase family. Bacterial CCA-adding enzyme type 3 subfamily. As to quaternary structure, homodimer. The cofactor is Mg(2+).

It carries out the reaction a tRNA precursor + 2 CTP + ATP = a tRNA with a 3' CCA end + 3 diphosphate. It catalyses the reaction a tRNA with a 3' CCA end + 2 CTP + ATP = a tRNA with a 3' CCACCA end + 3 diphosphate. Catalyzes the addition and repair of the essential 3'-terminal CCA sequence in tRNAs without using a nucleic acid template. Adds these three nucleotides in the order of C, C, and A to the tRNA nucleotide-73, using CTP and ATP as substrates and producing inorganic pyrophosphate. tRNA 3'-terminal CCA addition is required both for tRNA processing and repair. Also involved in tRNA surveillance by mediating tandem CCA addition to generate a CCACCA at the 3' terminus of unstable tRNAs. While stable tRNAs receive only 3'-terminal CCA, unstable tRNAs are marked with CCACCA and rapidly degraded. The sequence is that of CCA-adding enzyme from Lactococcus lactis subsp. cremoris (strain SK11).